The chain runs to 134 residues: ATP synthase epsilon chain (134 aa).

This sequence belongs to the ATPase epsilon chain family. As to quaternary structure, F-type ATPases have 2 components, CF(1) - the catalytic core - and CF(0) - the membrane proton channel. CF(1) has five subunits: alpha(3), beta(3), gamma(1), delta(1), epsilon(1). CF(0) has three main subunits: a, b and c.

The protein localises to the cell membrane. Its function is as follows. Produces ATP from ADP in the presence of a proton gradient across the membrane. The protein is ATP synthase epsilon chain of Alkaliphilus oremlandii (strain OhILAs) (Clostridium oremlandii (strain OhILAs)).